The primary structure comprises 287 residues: Nucleotide-binding protein Hhal_2130 (287 aa).

Position 11–18 (Gly11–Ser18) interacts with ATP. Asp63–Asn66 lines the GTP pocket.

Belongs to the RapZ-like family.

In terms of biological role, displays ATPase and GTPase activities. The chain is Nucleotide-binding protein Hhal_2130 from Halorhodospira halophila (strain DSM 244 / SL1) (Ectothiorhodospira halophila (strain DSM 244 / SL1)).